A 387-amino-acid chain; its full sequence is Succinate--CoA ligase [ADP-forming] subunit beta (387 aa).

The 236-residue stretch at 9-244 folds into the ATP-grasp domain; the sequence is KQLFASYGLP…VSQEDDRENR (236 aa). Residues Lys-46, 53-55, Glu-99, Cys-102, and Glu-107 each bind ATP; that span reads GRG. Residues Asn-199 and Asp-213 each contribute to the Mg(2+) site. Substrate contacts are provided by residues Asn-264 and 321–323; that span reads GIV.

The protein belongs to the succinate/malate CoA ligase beta subunit family. In terms of assembly, heterotetramer of two alpha and two beta subunits. Mg(2+) serves as cofactor.

The catalysed reaction is succinate + ATP + CoA = succinyl-CoA + ADP + phosphate. The enzyme catalyses GTP + succinate + CoA = succinyl-CoA + GDP + phosphate. It functions in the pathway carbohydrate metabolism; tricarboxylic acid cycle; succinate from succinyl-CoA (ligase route): step 1/1. Functionally, succinyl-CoA synthetase functions in the citric acid cycle (TCA), coupling the hydrolysis of succinyl-CoA to the synthesis of either ATP or GTP and thus represents the only step of substrate-level phosphorylation in the TCA. The beta subunit provides nucleotide specificity of the enzyme and binds the substrate succinate, while the binding sites for coenzyme A and phosphate are found in the alpha subunit. The chain is Succinate--CoA ligase [ADP-forming] subunit beta from Legionella pneumophila (strain Corby).